A 410-amino-acid polypeptide reads, in one-letter code: 2-oxoglutarate-dependent dioxygenase AOP3 (410 aa).

Residues 258 to 355 (GNASVGAKEA…RYAAALFSNP (98 aa)) form the Fe2OG dioxygenase domain. Fe cation contacts are provided by H278, D280, and H335. R346 lines the 2-oxoglutarate pocket.

This sequence belongs to the iron/ascorbate-dependent oxidoreductase family. Requires Fe(2+) as cofactor.

2-oxoglutarate-dependent dioxygenase involved in glucosinolates biosynthesis. Catalyzes the conversion of methylsulfinylalkyl glucosinolates to hydroxyalkyl glucosinolates. In Arabidopsis thaliana (Mouse-ear cress), this protein is 2-oxoglutarate-dependent dioxygenase AOP3 (AOP3).